Here is a 603-residue protein sequence, read N- to C-terminus: F-box only protein 46 (603 aa).

The segment at 20–54 is disordered; sequence YSQNQPRPPSATLKPPVCPDTSSGTEPDHRPAHLE. Residues Ser21 and Ser67 each carry the phosphoserine modification. Disordered regions lie at residues 111–163, 235–301, 332–359, and 396–442; these read GGSR…PTSS, EAQR…TRAK, EASE…ARDC, and TVSP…GTTD. Thr347 bears the Phosphothreonine mark. Residues 347 to 356 are compositionally biased toward pro residues; that stretch reads TPPAPPPPPA. In terms of domain architecture, F-box spans 470 to 522; it reads RQYMLLLPEHVLVKIFSFLPTRALAALKCTCHHFKGIIEAFGVRATDSRWSRD.

As to quaternary structure, part of a SCF (SKP1-cullin-F-box) protein ligase complex SCF(FBXO46) composed of CUL1, SKP1, RBX1 and FBXO46. Phosphorylated by ATM in response to DNA damage, promoting ubiquitination and degradation by the SCF(FBXO31) complex. In terms of processing, ATM-phosphorylated FBXO46 is ubiquitinated and degradaded by the SCF(FBXO31) complex in response to DNA damage.

Its pathway is protein modification; protein ubiquitination. Substrate-recognition component of the SCF(FBXO46) protein ligase complex, which mediates the ubiquitination and degradation of target proteins. In absence of stress, the SCF(FBXO46) complex catalyzes ubiquitination and degradation of MTOR-phosphorylated FBXO31. The chain is F-box only protein 46 (Fbxo46) from Rattus norvegicus (Rat).